Consider the following 243-residue polypeptide: Probable transcriptional regulatory protein Smlt3713 (243 aa).

Belongs to the TACO1 family.

It is found in the cytoplasm. In Stenotrophomonas maltophilia (strain K279a), this protein is Probable transcriptional regulatory protein Smlt3713.